We begin with the raw amino-acid sequence, 77 residues long: ATP synthase subunit 9, mitochondrial (77 aa).

2 helical membrane passes run 8-28 (MGAG…GNVL) and 45-72 (LFGY…LISF).

It belongs to the ATPase C chain family. As to quaternary structure, F-type ATPases have 2 components, CF(1) - the catalytic core - and CF(0) - the membrane proton channel. CF(1) has five subunits: alpha(3), beta(3), gamma(1), delta(1), epsilon(1). CF(0) has three main subunits: a, b and c.

It is found in the mitochondrion membrane. Its function is as follows. This protein is one of the chains of the nonenzymatic membrane component (F0) of mitochondrial ATPase. This chain is ATP synthase subunit 9, mitochondrial (ATP9), found in Petunia sp. (Petunia).